A 147-amino-acid chain; its full sequence is Lysozyme C (147 aa).

The N-terminal stretch at 1-18 is a signal peptide; that stretch reads MKVLLLLGFIFCSMAAHG. The C-type lysozyme domain occupies 19–147; sequence KRMERCEFAR…LSKYLEGCHL (129 aa). Intrachain disulfides connect C24–C145, C48–C133, C83–C99, and C95–C113. Residues E53 and D71 contribute to the active site.

Belongs to the glycosyl hydrolase 22 family. In terms of assembly, monomer.

The protein resides in the secreted. The catalysed reaction is Hydrolysis of (1-&gt;4)-beta-linkages between N-acetylmuramic acid and N-acetyl-D-glucosamine residues in a peptidoglycan and between N-acetyl-D-glucosamine residues in chitodextrins.. Its function is as follows. Lysozymes have primarily a bacteriolytic function; those in tissues and body fluids are associated with the monocyte-macrophage system and enhance the activity of immunoagents. This chain is Lysozyme C (LYZ), found in Trichosurus vulpecula (Brush-tailed possum).